The chain runs to 982 residues: Nitrate reductase [NADPH] (982 aa).

The segment at 1–128 is disordered; that stretch reads MEAPALEQRQ…PPSTRLTTIL (128 aa). The span at 10–20 shows a compositional bias: basic and acidic residues; it reads QSLHDSSERQQ. Low complexity predominate over residues 63-110; sequence TASPTTTDFSSSSSDDNSTTLETSVNYSHSSNTNTNTSCPPSPITSSS. Cysteine 240 is a binding site for Mo-molybdopterin. Residues 617 to 692 form the Cytochrome b5 heme-binding domain; the sequence is TRLITLEELR…MPTYHIGTLT (76 aa). Histidine 652 and histidine 675 together coordinate heme. Residues 721–836 enclose the FAD-binding FR-type domain; that stretch reads KTWNSAILTF…KGPVGKFVYQ (116 aa). Residues 776–779, 794–798, 810–812, serine 860, and threonine 863 contribute to the FAD site; these read RAYT, LVKIY, and QMT. 952 to 961 lines the NADP(+) pocket; it reads MVLLCGPEGM.

The protein belongs to the nitrate reductase family. Homodimer. It depends on FAD as a cofactor. Heme serves as cofactor. Requires Mo-molybdopterin as cofactor.

It catalyses the reaction nitrite + NADP(+) + H2O = nitrate + NADPH + H(+). Its pathway is nitrogen metabolism; nitrate reduction (assimilation). Nitrate reductase is a key enzyme involved in the first step of nitrate assimilation in plants, fungi and bacteria. In Neurospora crassa (strain ATCC 24698 / 74-OR23-1A / CBS 708.71 / DSM 1257 / FGSC 987), this protein is Nitrate reductase [NADPH] (nit-3).